Reading from the N-terminus, the 589-residue chain is Kelch-like protein 25 (589 aa).

One can recognise a BTB domain in the interval 46–114 (TDVTLWAGNR…AYSSKIIINE (69 aa)). Positions 149–250 (CLGMMILSDA…LPSELLKEAV (102 aa)) constitute a BACK domain. 6 Kelch repeats span residues 296-340 (TLLI…AIGC), 341-388 (KVYV…ELEN), 389-444 (CLYV…SAKL), 446-492 (LFAF…VLGS), 493-538 (QIFI…ASGN), and 539-585 (KVYV…STWK).

In terms of assembly, component of the BCR(KLHL25) E3 ubiquitin ligase complex, at least composed of cul3, klhl25 and rbx1.

It functions in the pathway protein modification; protein ubiquitination. Functionally, substrate-specific adapter of a BCR (BTB-CUL3-RBX1) E3 ubiquitin ligase complex involved in various processes, such as translation homeostasis and lipid synthesis. The BCR(KLHL25) ubiquitin ligase complex acts by mediating ubiquitination of hypophosphorylated eif4ebp1 (4E-BP1): ubiquitination and subsequent degradation of hypophosphorylated EIF4EBP1 (4E-BP1) probably serves as a homeostatic mechanism to maintain translation and prevent eIF4E inhibition when eIF4E levels are low. The BCR(KLHL25) complex also acts as a regulator of lipid synthesis by mediating ubiquitination and degradation of ACLY, thereby inhibiting lipid synthesis. This Xenopus tropicalis (Western clawed frog) protein is Kelch-like protein 25.